Consider the following 406-residue polypeptide: Tubby-like F-box protein 3 (406 aa).

The region spanning 50–105 (SCWASMPPELLRDVLMRIEQSEDTWPSRKNVVSCAGVCRNWREIVKEIVRVPELSS) is the F-box domain.

Belongs to the TUB family. Ubiquitous at low levels. Not detected in mature siliques.

It localises to the cell membrane. Its subcellular location is the plastid. The protein localises to the nucleus. It is found in the nucleoplasm. The protein resides in the cytoplasm. Its function is as follows. Involved in abiotic stress signaling. Tethered to plasma membrane (PM) and probably bound to phosphatidylinositol 4,5-bisphosphate. Abiotic stresses (drought, salt, H(2)O(2)) trigger phospholipase C mediated PM dislogement and plastidial and nucleocytosolic relocation of TULP3. The chain is Tubby-like F-box protein 3 from Arabidopsis thaliana (Mouse-ear cress).